A 508-amino-acid chain; its full sequence is Hydroxymethylglutaryl-CoA synthase, mitochondrial (508 aa).

A mitochondrion-targeting transit peptide spans 1 to 37 (MQRLLTPVRQVLRVKRAMQEASFMPPLLPPAAHQRFS). At Lys-52 the chain carries N6-succinyllysine. (3S)-3-hydroxy-3-methylglutaryl-CoA-binding residues include Glu-80 and Ala-81. Glu-132 functions as the Proton donor/acceptor in the catalytic mechanism. (3S)-3-hydroxy-3-methylglutaryl-CoA-binding residues include Cys-166, Asn-204, and Thr-208. Catalysis depends on Cys-166, which acts as the Acyl-thioester intermediate. Lys-243 is modified (N6-acetyllysine). Lys-256 carries the N6-acetyllysine; alternate modification. Lys-256 carries the N6-succinyllysine; alternate modification. Positions 258 and 301 each coordinate (3S)-3-hydroxy-3-methylglutaryl-CoA. His-301 (proton donor/acceptor) is an active-site residue. An N6-acetyllysine modification is found at Lys-306. Lys-310 contacts (3S)-3-hydroxy-3-methylglutaryl-CoA. Position 310 is an N6-acetyllysine; alternate (Lys-310). An N6-succinyllysine; alternate modification is found at Lys-310. An N6-succinyllysine modification is found at Lys-333. 4 positions are modified to N6-acetyllysine; alternate: Lys-342, Lys-350, Lys-354, and Lys-358. An N6-succinyllysine; alternate mark is found at Lys-342, Lys-350, Lys-354, and Lys-358. Residues Asn-380 and Ser-414 each contribute to the (3S)-3-hydroxy-3-methylglutaryl-CoA site. Phosphoserine is present on Ser-433. Lys-437 carries the N6-acetyllysine modification. 2 positions are modified to phosphoserine: Ser-440 and Ser-456. The residue at position 473 (Lys-473) is an N6-acetyllysine; alternate. Lys-473 is modified (N6-succinyllysine; alternate).

The protein belongs to the thiolase-like superfamily. HMG-CoA synthase family. Homodimer. Post-translationally, succinylated. Desuccinylated by SIRT5. Succinylation, at least at Lys-310, inhibits the enzymatic activity.

It is found in the mitochondrion. It carries out the reaction acetoacetyl-CoA + acetyl-CoA + H2O = (3S)-3-hydroxy-3-methylglutaryl-CoA + CoA + H(+). It participates in metabolic intermediate biosynthesis; (R)-mevalonate biosynthesis; (R)-mevalonate from acetyl-CoA: step 2/3. In terms of biological role, catalyzes the first irreversible step in ketogenesis, condensing acetyl-CoA to acetoacetyl-CoA to form HMG-CoA, which is converted by HMG-CoA reductase (HMGCR) into mevalonate. The polypeptide is Hydroxymethylglutaryl-CoA synthase, mitochondrial (HMGCS2) (Sus scrofa (Pig)).